The chain runs to 97 residues: uncharacterized protein (97 aa).

This is an uncharacterized protein from Escherichia coli O6:K15:H31 (strain 536 / UPEC).